The following is a 509-amino-acid chain: ATP synthase subunit alpha (509 aa).

Gly-169–Thr-176 contributes to the ATP binding site.

This sequence belongs to the ATPase alpha/beta chains family. As to quaternary structure, F-type ATPases have 2 components, CF(1) - the catalytic core - and CF(0) - the membrane proton channel. CF(1) has five subunits: alpha(3), beta(3), gamma(1), delta(1), epsilon(1). CF(0) has three main subunits: a(1), b(2) and c(9-12). The alpha and beta chains form an alternating ring which encloses part of the gamma chain. CF(1) is attached to CF(0) by a central stalk formed by the gamma and epsilon chains, while a peripheral stalk is formed by the delta and b chains.

The protein resides in the cell inner membrane. The catalysed reaction is ATP + H2O + 4 H(+)(in) = ADP + phosphate + 5 H(+)(out). Its function is as follows. Produces ATP from ADP in the presence of a proton gradient across the membrane. The alpha chain is a regulatory subunit. The protein is ATP synthase subunit alpha of Chelativorans sp. (strain BNC1).